Consider the following 148-residue polypeptide: Basic leucine zipper 4 (148 aa).

A bZIP domain is found at 48-97 (DDKKRRRTISNRESAKRSRMKKKKRFEELTEEVNRLNIRNQELKNRLANV). The segment at 50 to 70 (KKRRRTISNRESAKRSRMKKK) is disordered. Residues 50–72 (KKRRRTISNRESAKRSRMKKKKR) form a basic motif region. Positions 76-90 (LTEEVNRLNIRNQEL) are leucine-zipper.

The protein localises to the nucleus. Probable transcription factor involved in somatic embryogenesis. Acts as a positive regulator of BHLH109. In Arabidopsis thaliana (Mouse-ear cress), this protein is Basic leucine zipper 4.